Here is a 60-residue protein sequence, read N- to C-terminus: Mating pheromone En-2 (60 aa).

4 disulfides stabilise this stretch: C11–C39, C24–C35, C31–C57, and C36–C48.

The protein resides in the secreted. In terms of biological role, mating ciliate pheromones (or gamones) are diffusible extracellular communication signals that distinguish different intraspecific classes of cells commonly referred to as 'mating types'. They prepare the latter for conjugation by changing their cell surface properties. This Euplotes nobilii (Ciliate) protein is Mating pheromone En-2.